The chain runs to 71 residues: Protein SlyX homolog (71 aa).

The tract at residues 52 to 71 is disordered; sequence RLDQAESSAGAPANERPPHY.

The protein belongs to the SlyX family.

This chain is Protein SlyX homolog, found in Rhodopseudomonas palustris (strain ATCC BAA-98 / CGA009).